A 252-amino-acid chain; its full sequence is MSGHNKWANIKHRKAAQDAKKSKIFTKLIREIIVAAKEGGGDPETNPRLRAVLERARAANMPKDTIEKSIKKGTGELEGVDYQEIIYEAYAPAGVALYIYAMTDNKNRTAQELRHLLSKHGGSLAESGSVAWLFERKGIIEIPKEKIADFEEFAMVAIDAGAEDIIEDDPIQVITAPDMLTEVKDKLAENGFEGEAKVTFIPKNTVKVTGADAEKVLKLVSVLEDNDDVQEVYANFEIDDKELEEIMSKLEG.

Belongs to the TACO1 family.

Its subcellular location is the cytoplasm. This chain is Probable transcriptional regulatory protein THA_1246, found in Thermosipho africanus (strain TCF52B).